The chain runs to 291 residues: ATP synthase gamma chain (291 aa).

It belongs to the ATPase gamma chain family. As to quaternary structure, F-type ATPases have 2 components, CF(1) - the catalytic core - and CF(0) - the membrane proton channel. CF(1) has five subunits: alpha(3), beta(3), gamma(1), delta(1), epsilon(1). CF(0) has three main subunits: a, b and c.

It is found in the cell inner membrane. Produces ATP from ADP in the presence of a proton gradient across the membrane. The gamma chain is believed to be important in regulating ATPase activity and the flow of protons through the CF(0) complex. The protein is ATP synthase gamma chain of Nitratidesulfovibrio vulgaris (strain ATCC 29579 / DSM 644 / CCUG 34227 / NCIMB 8303 / VKM B-1760 / Hildenborough) (Desulfovibrio vulgaris).